Consider the following 1009-residue polypeptide: MICAL-like protein 2 (1009 aa).

In terms of domain architecture, Calponin-homology (CH) spans 1–107 (MAAIKALQEW…YVSQYYNYFH (107 aa)). The interval 1–260 (MAAIKALQEW…KSSNLASRKP (260 aa)) is forms an intramolecular interaction with the C-terminal coiled coil domain keeping the protein in a closed conformation. 3 positions are modified to phosphoserine: Ser110, Ser143, and Ser153. Disordered stretches follow at residues 114–180 (GMAG…PGTA), 247–268 (SVSP…ADTR), 348–447 (NSSP…TSKV), and 655–834 (SPSI…TSPV). Over residues 144 to 171 (PAQTQRSPLSPARTNPVVQRNEGGSQRP) the composition is skewed to polar residues. The LIM zinc-binding domain maps to 186 to 248 (SICGVCGKHV…THHSSEVTSV (63 aa)). A Phosphoserine modification is found at Ser249. The interval 261–393 (GGVTADTRPF…QGQTASKGVK (133 aa)) is necessary and sufficient for interaction with actinins. Residues 261–805 (GGVTADTRPF…EDGTRSCKEE (545 aa)) are mediates targeting to the cell plasma membrane. The span at 348 to 419 (NSSPIGWSSP…AWTSSASKTQ (72 aa)) shows a compositional bias: polar residues. Residues 430–442 (PSAPAPASAPAPA) show a composition bias toward pro residues. The span at 694–730 (EGWRARLKPVDKKTPAGRSLEQKEPVLAEPRIGDTSR) shows a compositional bias: basic and acidic residues. 2 stretches are compositionally biased toward low complexity: residues 731 to 746 (KASS…TLTS) and 755 to 769 (PAGS…SPSP). Ser766 and Ser768 each carry phosphoserine. Residues 791-817 (EPKKQEDGTRSCKEEKSPTRWSRERSA) show a composition bias toward basic and acidic residues. The forms an intramolecular interaction with the N-terminal Calponin-homology and LIM zinc-binding domains-containing region keeping the protein in a closed conformation stretch occupies residues 806 to 913 (KSPTRWSRER…LMYKSKDQRL (108 aa)). Ser832 carries the post-translational modification Phosphoserine. The bMERB domain maps to 833–980 (PVRLHPDYIP…EQEEDQMLEN (148 aa)). The stretch at 841-880 (IPQEELQRQLQDIESQLDALELRGVELEKRLRAAEGDASE) forms a coiled coil. Residues 913–1009 (LEEQQLDLQG…WSSKSKSGQA (97 aa)) are mediates interaction with RAB13 and is required for transition from the closed to the open conformation.

Interacts with RAB13 (GTP-bound form); competes with RAB8A and is involved in tight junctions assembly. Interacts with RAB8A; competes with RAB13 and is involved in E-cadherin endocytic recycling. Interacts with RAB8B. Interacts (preferentially in opened conformation) with ACTN1 and ACTN4; stimulated by RAB13 activation. Interacts (via calponin-homology (CH) domain) with the filamins FLNA, FLNB and FLNC (via actin-binding domain). Detected in brain, lung, liver and kidney (at protein level).

The protein resides in the cell membrane. It localises to the cell junction. Its subcellular location is the tight junction. The protein localises to the recycling endosome. It is found in the cell projection. The protein resides in the neuron projection. It localises to the cytoplasm. Its subcellular location is the cytoskeleton. In terms of biological role, effector of small Rab GTPases RAB8A and RAB13 which is involved in junctional complexes assembly through the regulation of cell adhesion molecules transport to the plasma membrane and actin cytoskeleton reorganization. Regulates the endocytic recycling of occludins, claudins and E-cadherin to the plasma membrane and may thereby regulate the establishment of tight junctions and adherens junctions. In parallel, may regulate actin cytoskeleton reorganization directly through interaction with F-actin or indirectly through actinins and filamins. Undergoes liquid-liquid phase separation to form tubular recycling endosomes. Plays 2 sequential roles in the biogenesis of tubular recycling endosomes: first organizes phase separation and then the closed form formed by interaction with RAB8A promotes endosomal tubulation. The chain is MICAL-like protein 2 (Micall2) from Mus musculus (Mouse).